Reading from the N-terminus, the 110-residue chain is NADH-quinone oxidoreductase subunit K (110 aa).

3 helical membrane-spanning segments follow: residues 13–33 (LNHY…GLFM), 41–61 (ILMS…AFSV), and 73–93 (IIIL…LLIY).

Belongs to the complex I subunit 4L family. As to quaternary structure, NDH-1 is composed of 14 different subunits. Subunits NuoA, H, J, K, L, M, N constitute the membrane sector of the complex.

The protein localises to the cell inner membrane. It catalyses the reaction a quinone + NADH + 5 H(+)(in) = a quinol + NAD(+) + 4 H(+)(out). NDH-1 shuttles electrons from NADH, via FMN and iron-sulfur (Fe-S) centers, to quinones in the respiratory chain. The immediate electron acceptor for the enzyme in this species is believed to be ubiquinone. Couples the redox reaction to proton translocation (for every two electrons transferred, four hydrogen ions are translocated across the cytoplasmic membrane), and thus conserves the redox energy in a proton gradient. This is NADH-quinone oxidoreductase subunit K from Rickettsia prowazekii (strain Madrid E).